The following is a 251-amino-acid chain: Ribosome maturation factor RimP (251 aa).

Residues 198 to 251 (NLGLEPPAAPHAKISEKTTKNTKPKKKPAPTNTKKHRLAAERARRGEIEPDEGD) form a disordered region. A compositionally biased stretch (basic residues) spans 217–234 (KNTKPKKKPAPTNTKKHR). Positions 235 to 245 (LAAERARRGEI) are enriched in basic and acidic residues.

Belongs to the RimP family.

It localises to the cytoplasm. Its function is as follows. Required for maturation of 30S ribosomal subunits. The protein is Ribosome maturation factor RimP of Bradyrhizobium diazoefficiens (strain JCM 10833 / BCRC 13528 / IAM 13628 / NBRC 14792 / USDA 110).